We begin with the raw amino-acid sequence, 60 residues long: MAKKGNRIQVILECTEHKTSGVPGTSRYITTKNKKNTPDRLEIKKFNPILKRVTVHKEIK.

This sequence belongs to the bacterial ribosomal protein bL33 family.

This Flavobacterium johnsoniae (strain ATCC 17061 / DSM 2064 / JCM 8514 / BCRC 14874 / CCUG 350202 / NBRC 14942 / NCIMB 11054 / UW101) (Cytophaga johnsonae) protein is Large ribosomal subunit protein bL33.